Here is a 289-residue protein sequence, read N- to C-terminus: MWFQLKIEHCPNDKIEEITEELEECGALSITLTDKNDNPVLEPEPGTTPLWPEVIIHALFAQAEEAQYAREQLVAKRPSLHCSLELLADKNWERAWMDDFRPQRFGNRLWVCPTWLPPPEPDAVNLILDPGLAFGTGTHATTSLCLTWLEQADLKNKSIIDYGCGSGILSLAAIKLGAKHVYAVDIDNQALQATQSNAHANHITESQLSISFPEALQNPVHLVIANILLAPLISLKERFHQLLPSGAHLVTSGILEEQAPLLIDAYDSAFTHIATEYCEGWSLLVFTSK.

4 residues coordinate S-adenosyl-L-methionine: Thr142, Gly163, Asp185, and Asn226.

This sequence belongs to the methyltransferase superfamily. PrmA family.

It localises to the cytoplasm. It carries out the reaction L-lysyl-[protein] + 3 S-adenosyl-L-methionine = N(6),N(6),N(6)-trimethyl-L-lysyl-[protein] + 3 S-adenosyl-L-homocysteine + 3 H(+). Methylates ribosomal protein L11. In Legionella pneumophila subsp. pneumophila (strain Philadelphia 1 / ATCC 33152 / DSM 7513), this protein is Ribosomal protein L11 methyltransferase.